We begin with the raw amino-acid sequence, 154 residues long: Phosphopantetheine adenylyltransferase (154 aa).

T10 is a substrate binding site. Residues T10 to F11 and H18 each bind ATP. Residues K42, L74, and R88 each coordinate substrate. Residues G89–R91, E99, and N124–S130 contribute to the ATP site.

It belongs to the bacterial CoaD family. Homohexamer. Mg(2+) is required as a cofactor.

It localises to the cytoplasm. The catalysed reaction is (R)-4'-phosphopantetheine + ATP + H(+) = 3'-dephospho-CoA + diphosphate. Its pathway is cofactor biosynthesis; coenzyme A biosynthesis; CoA from (R)-pantothenate: step 4/5. Its function is as follows. Reversibly transfers an adenylyl group from ATP to 4'-phosphopantetheine, yielding dephospho-CoA (dPCoA) and pyrophosphate. The polypeptide is Phosphopantetheine adenylyltransferase (Nautilia profundicola (strain ATCC BAA-1463 / DSM 18972 / AmH)).